The following is a 99-amino-acid chain: Ferredoxin, vegetative (99 aa).

A 2Fe-2S ferredoxin-type domain is found at 4-96 (YQVRLINKKR…DCTIRTHQEP (93 aa)). [2Fe-2S] cluster is bound by residues cysteine 42, cysteine 47, cysteine 50, and cysteine 80.

Belongs to the 2Fe2S plant-type ferredoxin family. [2Fe-2S] cluster is required as a cofactor.

Functionally, ferredoxins are iron-sulfur proteins that transfer electrons in a wide variety of metabolic reactions. Donates electrons to the nitrogenase 2. This chain is Ferredoxin, vegetative (fdxH2), found in Trichormus variabilis (strain ATCC 29413 / PCC 7937) (Anabaena variabilis).